Reading from the N-terminus, the 219-residue chain is Vesicle-associated membrane protein 721 (219 aa).

At methionine 1 to leucine 196 the chain is on the cytoplasmic side. The Longin domain maps to phenylalanine 10–leucine 114. Residues lysine 130–glutamine 190 enclose the v-SNARE coiled-coil homology domain. Residues isoleucine 197 to phenylalanine 217 traverse the membrane as a helical; Anchor for type IV membrane protein segment. Topologically, residues lysine 218–cysteine 219 are vesicular.

This sequence belongs to the synaptobrevin family. In terms of tissue distribution, expressed in flowers, leaves, stems and roots.

The protein localises to the cell membrane. It localises to the early endosome membrane. Involved in the targeting and/or fusion of transport vesicles to their target membrane. The chain is Vesicle-associated membrane protein 721 from Arabidopsis thaliana (Mouse-ear cress).